The following is a 1072-amino-acid chain: Translation initiation factor IF-2 (1072 aa).

2 disordered regions span residues 55 to 369 (ILDK…TGTA) and 426 to 452 (ELVDVSKNKERGQRKRTSGDTQSVSKQ). 4 stretches are compositionally biased toward low complexity: residues 91–100 (AEASQAAEPA), 108–118 (EPATFAAEEPV), 126–179 (APRA…AEVA), and 186–212 (EAPQAPVEAPRAAVPAPAAAQPRPSVQ). Positions 218 to 230 (PQPPPRSPVPPAV) are enriched in pro residues. Residues 231–245 (RTPSSTSSSATVVSR) are compositionally biased toward low complexity. The span at 253–307 (QRGGPGGGRPGGPGGPGGRPGGPGGPGGRPGGPGGPGGRPGGPGGPGGRPGGPGG) shows a compositional bias: gly residues. The span at 426–436 (ELVDVSKNKER) shows a compositional bias: basic and acidic residues. The tr-type G domain occupies 570–737 (PRPPVVAIMG…NLALQAEVLE (168 aa)). Residues 579 to 586 (GHVDHGKT) form a G1 region. 579–586 (GHVDHGKT) contributes to the GTP binding site. Residues 604–608 (GITQH) form a G2 region. Positions 625 to 628 (DTPG) are G3. Residues 625–629 (DTPGH) and 679–682 (NKMD) contribute to the GTP site. The segment at 679–682 (NKMD) is G4. Residues 715–717 (SAK) are G5.

Belongs to the TRAFAC class translation factor GTPase superfamily. Classic translation factor GTPase family. IF-2 subfamily.

Its subcellular location is the cytoplasm. Its function is as follows. One of the essential components for the initiation of protein synthesis. Protects formylmethionyl-tRNA from spontaneous hydrolysis and promotes its binding to the 30S ribosomal subunits. Also involved in the hydrolysis of GTP during the formation of the 70S ribosomal complex. This is Translation initiation factor IF-2 from Myxococcus xanthus (strain DK1622).